The sequence spans 352 residues: UDP-N-acetylglucosamine--N-acetylmuramyl-(pentapeptide) pyrophosphoryl-undecaprenol N-acetylglucosamine transferase (352 aa).

UDP-N-acetyl-alpha-D-glucosamine-binding positions include 13–15 (TGG), Asn-125, Arg-161, Ser-189, Ile-242, 261–266 (ALTVSE), and Gln-286.

It belongs to the glycosyltransferase 28 family. MurG subfamily.

The protein localises to the cell inner membrane. The catalysed reaction is di-trans,octa-cis-undecaprenyl diphospho-N-acetyl-alpha-D-muramoyl-L-alanyl-D-glutamyl-meso-2,6-diaminopimeloyl-D-alanyl-D-alanine + UDP-N-acetyl-alpha-D-glucosamine = di-trans,octa-cis-undecaprenyl diphospho-[N-acetyl-alpha-D-glucosaminyl-(1-&gt;4)]-N-acetyl-alpha-D-muramoyl-L-alanyl-D-glutamyl-meso-2,6-diaminopimeloyl-D-alanyl-D-alanine + UDP + H(+). It functions in the pathway cell wall biogenesis; peptidoglycan biosynthesis. Its function is as follows. Cell wall formation. Catalyzes the transfer of a GlcNAc subunit on undecaprenyl-pyrophosphoryl-MurNAc-pentapeptide (lipid intermediate I) to form undecaprenyl-pyrophosphoryl-MurNAc-(pentapeptide)GlcNAc (lipid intermediate II). In Erwinia tasmaniensis (strain DSM 17950 / CFBP 7177 / CIP 109463 / NCPPB 4357 / Et1/99), this protein is UDP-N-acetylglucosamine--N-acetylmuramyl-(pentapeptide) pyrophosphoryl-undecaprenol N-acetylglucosamine transferase.